Consider the following 365-residue polypeptide: Ribosomal RNA large subunit methyltransferase F (365 aa).

Positions 1–50 (MSKPAVKSVPSATAKTATRAVNIRQKVKAPKQAKPEAKGRAKPSKDKPRA) are disordered. Over residues 33 to 50 (AKPEAKGRAKPSKDKPRA) the composition is skewed to basic and acidic residues.

This sequence belongs to the methyltransferase superfamily. METTL16/RlmF family.

It localises to the cytoplasm. It catalyses the reaction adenosine(1618) in 23S rRNA + S-adenosyl-L-methionine = N(6)-methyladenosine(1618) in 23S rRNA + S-adenosyl-L-homocysteine + H(+). Functionally, specifically methylates the adenine in position 1618 of 23S rRNA. The sequence is that of Ribosomal RNA large subunit methyltransferase F from Shewanella baltica (strain OS155 / ATCC BAA-1091).